The sequence spans 250 residues: 1-(5-phosphoribosyl)-5-[(5-phosphoribosylamino)methylideneamino] imidazole-4-carboxamide isomerase (250 aa).

D8 (proton acceptor) is an active-site residue. Residue D131 is the Proton donor of the active site.

This sequence belongs to the HisA/HisF family.

It localises to the cytoplasm. It carries out the reaction 1-(5-phospho-beta-D-ribosyl)-5-[(5-phospho-beta-D-ribosylamino)methylideneamino]imidazole-4-carboxamide = 5-[(5-phospho-1-deoxy-D-ribulos-1-ylimino)methylamino]-1-(5-phospho-beta-D-ribosyl)imidazole-4-carboxamide. The protein operates within amino-acid biosynthesis; L-histidine biosynthesis; L-histidine from 5-phospho-alpha-D-ribose 1-diphosphate: step 4/9. The sequence is that of 1-(5-phosphoribosyl)-5-[(5-phosphoribosylamino)methylideneamino] imidazole-4-carboxamide isomerase from Paraburkholderia phytofirmans (strain DSM 17436 / LMG 22146 / PsJN) (Burkholderia phytofirmans).